The chain runs to 90 residues: Small ribosomal subunit protein uS17 (90 aa).

This sequence belongs to the universal ribosomal protein uS17 family. Part of the 30S ribosomal subunit.

In terms of biological role, one of the primary rRNA binding proteins, it binds specifically to the 5'-end of 16S ribosomal RNA. The chain is Small ribosomal subunit protein uS17 from Paraburkholderia phymatum (strain DSM 17167 / CIP 108236 / LMG 21445 / STM815) (Burkholderia phymatum).